A 152-amino-acid chain; its full sequence is Small ribosomal subunit protein uS19 (152 aa).

This sequence belongs to the universal ribosomal protein uS19 family.

The sequence is that of Small ribosomal subunit protein uS19 (RPS15) from Podospora anserina (Pleurage anserina).